A 172-amino-acid polypeptide reads, in one-letter code: S-ribosylhomocysteine lyase (172 aa).

His54, His58, and Cys128 together coordinate Fe cation.

This sequence belongs to the LuxS family. Homodimer. Requires Fe cation as cofactor.

The enzyme catalyses S-(5-deoxy-D-ribos-5-yl)-L-homocysteine = (S)-4,5-dihydroxypentane-2,3-dione + L-homocysteine. Involved in the synthesis of autoinducer 2 (AI-2) which is secreted by bacteria and is used to communicate both the cell density and the metabolic potential of the environment. The regulation of gene expression in response to changes in cell density is called quorum sensing. Catalyzes the transformation of S-ribosylhomocysteine (RHC) to homocysteine (HC) and 4,5-dihydroxy-2,3-pentadione (DPD). This Aliivibrio fischeri (strain MJ11) (Vibrio fischeri) protein is S-ribosylhomocysteine lyase.